We begin with the raw amino-acid sequence, 56 residues long: Botcinic acid biosynthesis cluster B protein 14 (56 aa).

It participates in polyketide biosynthesis. Its function is as follows. Part of the gene cluster B that mediates the biosynthesis of botcinic acid and its botcinin derivatives, acetate-derived polyketides that contribute to virulence when combined with the sesquiterpene botrydial. Botcinic acid and its derivatives have been shown to induce chlorosis and necrosis during host plant infection, but also have antifungal activities. Two polyketide synthases, BOA6 and BOA9, are involved in the biosynthesis of botcinins. BOA6 mediates the formation of the per-methylated tetraketide core by condensation of four units of malonyl-CoA with one unit of acetyl-CoA, which would be methylated in activated methylene groups to yield a bicyclic acid intermediate that could then either be converted to botrylactone derivatives or lose the starter acetate unit through a retro-Claisen type C-C bond cleavage to yield botcinin derivatives. The second polyketide synthase, BOA9, is probably required for the biosynthesis of the tetraketide side chain of botcinins. The methyltransferase (MT) domain within BOA6 is probably responsible for the incorporation of four methyl groups. The trans-enoyl reductase BOA5 might take over the enoyl reductase function of BOA6 that misses an ER domain. The monooxygenases BOA2, BOA3 and BOA4 might be involved in further hydroxylations at C4, C5 and C8, whereas BOA7, close to BOA9, could potentially be involved in the hydroxylation at C4 in the side chain of botcinins. This is Botcinic acid biosynthesis cluster B protein 14 from Botryotinia fuckeliana (strain B05.10) (Noble rot fungus).